A 711-amino-acid chain; its full sequence is Polyribonucleotide nucleotidyltransferase (711 aa).

Mg(2+)-binding residues include Asp-486 and Asp-492. The KH domain maps to 553 to 612; that stretch reads PRIHTIKISTDKIKDVIGKGGSVIRALTEETGTTIEIEDDGTVKIAATDGEKAKYAIRRI. The S1 motif domain occupies 622–690; the sequence is GRIYNGKVTR…RQGRVRLSIK (69 aa). Residues 689 to 711 form a disordered region; the sequence is IKEATEQTQPAAAPEAPTSEQGE. Low complexity predominate over residues 694 to 711; sequence EQTQPAAAPEAPTSEQGE.

The protein belongs to the polyribonucleotide nucleotidyltransferase family. Component of the RNA degradosome, which is a multiprotein complex involved in RNA processing and mRNA degradation. Requires Mg(2+) as cofactor.

It is found in the cytoplasm. The catalysed reaction is RNA(n+1) + phosphate = RNA(n) + a ribonucleoside 5'-diphosphate. Functionally, involved in mRNA degradation. Catalyzes the phosphorolysis of single-stranded polyribonucleotides processively in the 3'- to 5'-direction. In Salmonella arizonae (strain ATCC BAA-731 / CDC346-86 / RSK2980), this protein is Polyribonucleotide nucleotidyltransferase.